Here is a 277-residue protein sequence, read N- to C-terminus: Large ribosomal subunit protein uL2c (277 aa).

2 disordered regions span residues 36 to 56 and 225 to 259; these read NKHSKKGRNNRGIITSRHRGG and MNSVDHPHGGGEGKTSIGRKKPLTPWGRTALGSKS.

The protein belongs to the universal ribosomal protein uL2 family. As to quaternary structure, part of the 50S ribosomal subunit.

The protein resides in the plastid. It is found in the chloroplast. The sequence is that of Large ribosomal subunit protein uL2c (rpl2) from Psilotum nudum (Whisk fern).